Consider the following 480-residue polypeptide: Thiamine biosynthesis bifunctional protein ThiM/ThiE (480 aa).

Positions 1 to 287 (MSTLPERVRE…LYVLVSGATP (287 aa)) are hydroxyethylthiazole kinase. M40 provides a ligand contact to 5-(2-hydroxyethyl)-4-methylthiazole. ATP contacts are provided by R116 and T164. Residue G191 participates in 5-(2-hydroxyethyl)-4-methylthiazole binding. Positions 288–480 (PDVLEAVLQA…VRRAKGEVSA (193 aa)) are thiamine-phosphate synthase. Residues 303–307 (QFREK) and N335 each bind 4-amino-2-methyl-5-(diphosphooxymethyl)pyrimidine. 2 residues coordinate Mg(2+): D336 and D355. Position 374 (T374) interacts with 4-amino-2-methyl-5-(diphosphooxymethyl)pyrimidine. 400-402 (TPS) contacts 2-[(2R,5Z)-2-carboxy-4-methylthiazol-5(2H)-ylidene]ethyl phosphate. K403 is a 4-amino-2-methyl-5-(diphosphooxymethyl)pyrimidine binding site. Residues G431 and 451 to 452 (IS) contribute to the 2-[(2R,5Z)-2-carboxy-4-methylthiazol-5(2H)-ylidene]ethyl phosphate site.

In the N-terminal section; belongs to the Thz kinase family. It in the C-terminal section; belongs to the thiamine-phosphate synthase family. Requires Mg(2+) as cofactor.

It catalyses the reaction 5-(2-hydroxyethyl)-4-methylthiazole + ATP = 4-methyl-5-(2-phosphooxyethyl)-thiazole + ADP + H(+). It carries out the reaction 2-[(2R,5Z)-2-carboxy-4-methylthiazol-5(2H)-ylidene]ethyl phosphate + 4-amino-2-methyl-5-(diphosphooxymethyl)pyrimidine + 2 H(+) = thiamine phosphate + CO2 + diphosphate. The enzyme catalyses 2-(2-carboxy-4-methylthiazol-5-yl)ethyl phosphate + 4-amino-2-methyl-5-(diphosphooxymethyl)pyrimidine + 2 H(+) = thiamine phosphate + CO2 + diphosphate. The catalysed reaction is 4-methyl-5-(2-phosphooxyethyl)-thiazole + 4-amino-2-methyl-5-(diphosphooxymethyl)pyrimidine + H(+) = thiamine phosphate + diphosphate. The protein operates within cofactor biosynthesis; thiamine diphosphate biosynthesis; 4-methyl-5-(2-phosphoethyl)-thiazole from 5-(2-hydroxyethyl)-4-methylthiazole: step 1/1. It functions in the pathway cofactor biosynthesis; thiamine diphosphate biosynthesis; thiamine phosphate from 4-amino-2-methyl-5-diphosphomethylpyrimidine and 4-methyl-5-(2-phosphoethyl)-thiazole: step 1/1. Functionally, condenses 4-methyl-5-(beta-hydroxyethyl)thiazole monophosphate (THZ-P) and 2-methyl-4-amino-5-hydroxymethyl pyrimidine pyrophosphate (HMP-PP) to form thiamine monophosphate (TMP). In Symbiobacterium thermophilum (strain DSM 24528 / JCM 14929 / IAM 14863 / T), this protein is Thiamine biosynthesis bifunctional protein ThiM/ThiE (thiM/thiE).